The sequence spans 172 residues: Peptidyl-prolyl cis-trans isomerase (172 aa).

In terms of domain architecture, PPIase cyclophilin-type spans 7-170 (FFDMSVGGQP…KKVVVEDCGQ (164 aa)).

The protein belongs to the cyclophilin-type PPIase family. Not glycosylated. As to expression, expressed in pollen.

It is found in the cytoplasm. The enzyme catalyses [protein]-peptidylproline (omega=180) = [protein]-peptidylproline (omega=0). With respect to regulation, binds cyclosporin A (CsA). CsA mediates some of its effects via an inhibitory action on PPIase. Functionally, PPIases accelerate the folding of proteins. It catalyzes the cis-trans isomerization of proline imidic peptide bonds in oligopeptides. The chain is Peptidyl-prolyl cis-trans isomerase (PCKR1) from Catharanthus roseus (Madagascar periwinkle).